The primary structure comprises 99 residues: Monothiol glutaredoxin-S11 (99 aa).

In terms of domain architecture, Glutaredoxin spans 1–99; the sequence is MDKVMRMSSE…LVPLVKPYLC (99 aa). Residue cysteine 21 coordinates [2Fe-2S] cluster.

This sequence belongs to the glutaredoxin family. CC-type subfamily.

Its subcellular location is the cytoplasm. In terms of biological role, may only reduce GSH-thiol disulfides, but not protein disulfides. The chain is Monothiol glutaredoxin-S11 (GRXS11) from Arabidopsis thaliana (Mouse-ear cress).